A 481-amino-acid chain; its full sequence is Glutamate mutase epsilon subunit (481 aa).

An L-glutamate-binding site is contributed by Arg-67. Gly-69 contacts adenosylcob(III)alamin. Arg-99 contributes to the L-glutamate binding site. Asn-122 is an adenosylcob(III)alamin binding site. L-glutamate-binding positions include 148–149 (RH), Glu-170, and Tyr-176. Pro-179 serves as a coordination point for adenosylcob(III)alamin. Tyr-180 lines the L-glutamate pocket. Residues Phe-296, Lys-325, Glu-329, and Ile-333 each contribute to the adenosylcob(III)alamin site.

It belongs to the methylaspartate mutase GlmE subunit family. As to quaternary structure, heterotetramer composed of 2 epsilon subunits (GlmE) and 2 sigma subunits (GlmS). GlmE exists as a homodimer and GlmS as a monomer. It depends on adenosylcob(III)alamin as a cofactor.

It catalyses the reaction (2S,3S)-3-methyl-L-aspartate = L-glutamate. It participates in amino-acid degradation; L-glutamate degradation via mesaconate pathway; acetate and pyruvate from L-glutamate: step 1/4. In terms of biological role, catalyzes the carbon skeleton rearrangement of L-glutamate to L-threo-3-methylaspartate ((2S,3S)-3-methylaspartate). The sequence is that of Glutamate mutase epsilon subunit from Escherichia coli O157:H7.